Consider the following 28-residue polypeptide: Heat shock protein 81 (28 aa).

Residues Asn-5 and Asp-21 each contribute to the ATP site.

It belongs to the heat shock protein 90 family. In terms of assembly, homodimer.

The protein resides in the cytoplasm. Putative molecular chaperone that may promote the maturation, structural maintenance and proper regulation of specific target proteins. This chain is Heat shock protein 81, found in Pseudotsuga menziesii (Douglas-fir).